The primary structure comprises 211 residues: Probable GTP-binding protein EngB (211 aa).

An EngB-type G domain is found at 22–195 (PFPEVAFAGK…WQLIDSYVLP (174 aa)). GTP is bound by residues 30–37 (GKSNVGKS), 57–61 (GKTQT), 75–78 (DLPG), 142–145 (TKLD), and 174–176 (FSS). Mg(2+) contacts are provided by Ser37 and Thr59.

Belongs to the TRAFAC class TrmE-Era-EngA-EngB-Septin-like GTPase superfamily. EngB GTPase family. Mg(2+) serves as cofactor.

Necessary for normal cell division and for the maintenance of normal septation. The chain is Probable GTP-binding protein EngB from Lachnospira eligens (strain ATCC 27750 / DSM 3376 / VPI C15-48 / C15-B4) (Eubacterium eligens).